Reading from the N-terminus, the 455-residue chain is Trigger factor (455 aa).

The region spanning 169 to 262 (GDVAIVDYEG…VKELKAKELP (94 aa)) is the PPIase FKBP-type domain.

This sequence belongs to the FKBP-type PPIase family. Tig subfamily.

Its subcellular location is the cytoplasm. The catalysed reaction is [protein]-peptidylproline (omega=180) = [protein]-peptidylproline (omega=0). Functionally, involved in protein export. Acts as a chaperone by maintaining the newly synthesized protein in an open conformation. Functions as a peptidyl-prolyl cis-trans isomerase. This Rippkaea orientalis (strain PCC 8801 / RF-1) (Cyanothece sp. (strain PCC 8801)) protein is Trigger factor.